The primary structure comprises 109 residues: Thiosulfate sulfurtransferase GlpE (109 aa).

Positions R16–A104 constitute a Rhodanese domain. The active-site Cysteine persulfide intermediate is C64.

It belongs to the GlpE family.

The protein localises to the cytoplasm. The enzyme catalyses thiosulfate + hydrogen cyanide = thiocyanate + sulfite + 2 H(+). It carries out the reaction thiosulfate + [thioredoxin]-dithiol = [thioredoxin]-disulfide + hydrogen sulfide + sulfite + 2 H(+). Transferase that catalyzes the transfer of sulfur from thiosulfate to thiophilic acceptors such as cyanide or dithiols. May function in a CysM-independent thiosulfate assimilation pathway by catalyzing the conversion of thiosulfate to sulfite, which can then be used for L-cysteine biosynthesis. This Pseudomonas entomophila (strain L48) protein is Thiosulfate sulfurtransferase GlpE.